The sequence spans 420 residues: Pyruvate dehydrogenase E1 component subunit alpha, mitochondrial (420 aa).

Residues 1–33 constitute a mitochondrion transit peptide; it reads MLAASFKRQPSQLVRGLGAVLRTPTRIGHVRTM. Pyruvate contacts are provided by His-112, Tyr-138, Arg-139, Ala-177, Gly-185, Val-187, Asp-216, Gly-217, Ala-218, Asn-245, and Tyr-247. 2 residues coordinate thiamine diphosphate: Tyr-138 and Arg-139. Thiamine diphosphate contacts are provided by Gly-185, Val-187, Asp-216, Gly-217, Ala-218, and Asn-245. Residue Asp-216 participates in Mg(2+) binding. Residues Asn-245 and Tyr-247 each contribute to the Mg(2+) site. His-312 is a thiamine diphosphate binding site. Phosphoserine; by PDK1 and PDK2 is present on Ser-313.

As to quaternary structure, pyruvate dehydrogenase (E1) is a tetramer of 2 alpha and 2 beta subunits. Eukaryotic pyruvate dehydrogenase (PDH) complexes are organized as a core consisting of the oligomeric dihydrolipoamide acetyl-transferase (E2), around which are arranged multiple copies of pyruvate dehydrogenase (E1), dihydrolipoamide dehydrogenase (E3) and protein X (E3BP) bound by non-covalent bonds. Thiamine diphosphate serves as cofactor. Requires Mg(2+) as cofactor. Post-translationally, phosphorylated at Ser-313 by pyruvate dehydrogenase kinases PKP1 (PDK1) and PKP2 (PDK2), and dephosphorylated by pyruvate dehydrogenase phosphatases PTC5 and PTC6.

Its subcellular location is the mitochondrion matrix. It catalyses the reaction N(6)-[(R)-lipoyl]-L-lysyl-[protein] + pyruvate + H(+) = N(6)-[(R)-S(8)-acetyldihydrolipoyl]-L-lysyl-[protein] + CO2. With respect to regulation, E1 activity is regulated by phosphorylation (inactivation) and dephosphorylation (activation) of the alpha subunit. Functionally, the pyruvate dehydrogenase complex catalyzes the overall conversion of pyruvate to acetyl-CoA and CO(2). This chain is Pyruvate dehydrogenase E1 component subunit alpha, mitochondrial (PDA1), found in Saccharomyces cerevisiae (strain ATCC 204508 / S288c) (Baker's yeast).